A 361-amino-acid chain; its full sequence is Protein-L-isoaspartate O-methyltransferase domain-containing protein 2 (361 aa).

Residue Gly2 is the site of N-myristoyl glycine attachment. Ser64 is a catalytic residue. AdoMet binding motif regions lie at residues 85 to 94 (LNLGSGTGYL), 160 to 164 (YDRVY), and 181 to 191 (LKVGGILVMPL). The segment at 240 to 250 (VRSLQDLARIA) is BC-box. The tract at residues 303–336 (SNPSDDNSCEDLEEERREEEEKTPPETKPDPPVN) is disordered. The segment covering 309-320 (NSCEDLEEERRE) has biased composition (acidic residues). The segment covering 321–331 (EEEKTPPETKP) has biased composition (basic and acidic residues). Positions 345–348 (LPLP) are CUL-box.

It belongs to the methyltransferase superfamily. L-isoaspartyl/D-aspartyl protein methyltransferase family.

It localises to the cytoplasm. Functionally, may act as a substrate recognition component of an ECS (Elongin BC-CUL5-SOCS-box protein) E3 ubiquitin ligase complex which mediates the ubiquitination and subsequent proteasomal degradation of target proteins. May bind to the methyltransferase cofactor S-adenosylmethionine (AdoMet) via the N-terminal AdoMet binding motif, but probably does not display methyltransferase activity. This Homo sapiens (Human) protein is Protein-L-isoaspartate O-methyltransferase domain-containing protein 2 (PCMTD2).